A 373-amino-acid polypeptide reads, in one-letter code: Methylmalonyl-CoA decarboxylase subunit beta (373 aa).

10 consecutive transmembrane segments (helical) span residues 17 to 37, 38 to 58, 81 to 101, 106 to 126, 132 to 152, 156 to 176, 206 to 226, 257 to 277, 280 to 300, and 343 to 363; these read FLAF…LLYL, AFAR…CLLA, IFPP…PLIA, LLLG…AMML, EAAA…YLAT, PHLL…VPLI, IVFP…ITSL, VTIF…FLSL, IKII…GVLF, and FLLM…AVAA.

It belongs to the GcdB/MmdB/OadB family. The methylmalonyl-CoA decarboxylase is composed of five subunits: the carboxyltransferase alpha subunit (MmdA), the tunnel beta subunit (MmdB), the biotin-containing gamma subunit (MmdC), and the delta (MmdD) and epsilon (MmdE) subunits. In terms of processing, the N-terminus is blocked.

The protein resides in the cell membrane. The enzyme catalyses (S)-methylmalonyl-CoA + Na(+)(in) + H(+)(out) = propanoyl-CoA + Na(+)(out) + CO2. With respect to regulation, completely inhibited by avidin. Its function is as follows. Tunnel subunit of the sodium ion pump methylmalonyl-CoA decarboxylase, which converts the chemical energy of a decarboxylation reaction into an electrochemical gradient of Na(+) ions across the cytoplasmic membrane, thereby creating a sodium ion motive force that is used for ATP synthesis. The beta subunit catalyzes the decarboxylation of the carboxybiotin carrier protein and the coupled export of Na(+) ions. Can also convert malonyl-CoA into acetyl-CoA. This is Methylmalonyl-CoA decarboxylase subunit beta from Veillonella parvula (Staphylococcus parvulus).